The sequence spans 273 residues: DnaJ homolog subfamily C member 27-A (273 aa).

Residues 23 to 30 (GNAEVGKS), 71 to 75 (DMAGH), and 134 to 137 (NKID) each bind GTP. One can recognise a J domain in the interval 217 to 273 (DSWDMLGVKPGATRDEVNKAYRKLAVLLHPDKCMAPGSEDAFKAVVNARTALLKNIK).

It belongs to the small GTPase superfamily. Rab family.

The protein localises to the nucleus. Functionally, GTPase possibly involved in regulation of the MEK/ERK pathway. This chain is DnaJ homolog subfamily C member 27-A (dnajc27-a), found in Xenopus laevis (African clawed frog).